A 476-amino-acid chain; its full sequence is Serine/threonine-protein kinase sax-1 (476 aa).

A Protein kinase domain is found at 87–381 (FESLKVIGRG…LDEIKQCPFV (295 aa)). Residues 93-101 (IGRGAFGEV) and Lys116 contribute to the ATP site. Residue Asp210 is the Proton acceptor of the active site. In terms of domain architecture, AGC-kinase C-terminal spans 382-452 (KRIDWNHIRE…KRFDGLTQKM (71 aa)).

This sequence belongs to the protein kinase superfamily. AGC Ser/Thr protein kinase family. It depends on Mg(2+) as a cofactor. As to expression, widely expressed in embryonic and larval neurons that contribute axons to the nerve ring and in hypodermal cells, including lateral seam cells. Also displays a punctate localization in muscle.

Its subcellular location is the cytoplasm. The protein resides in the nucleus. It catalyses the reaction L-seryl-[protein] + ATP = O-phospho-L-seryl-[protein] + ADP + H(+). The catalysed reaction is L-threonyl-[protein] + ATP = O-phospho-L-threonyl-[protein] + ADP + H(+). Its function is as follows. Acts with sax-2 to restrict the growth of both primary and secondary neurites. Regulates mechanosensory tiling by controlling the termination point of sensory dendrites. This chain is Serine/threonine-protein kinase sax-1, found in Caenorhabditis elegans.